The following is a 187-amino-acid chain: Protein GrpE (187 aa).

This sequence belongs to the GrpE family. Homodimer.

The protein resides in the cytoplasm. Functionally, participates actively in the response to hyperosmotic and heat shock by preventing the aggregation of stress-denatured proteins, in association with DnaK and GrpE. It is the nucleotide exchange factor for DnaK and may function as a thermosensor. Unfolded proteins bind initially to DnaJ; upon interaction with the DnaJ-bound protein, DnaK hydrolyzes its bound ATP, resulting in the formation of a stable complex. GrpE releases ADP from DnaK; ATP binding to DnaK triggers the release of the substrate protein, thus completing the reaction cycle. Several rounds of ATP-dependent interactions between DnaJ, DnaK and GrpE are required for fully efficient folding. The chain is Protein GrpE from Albidiferax ferrireducens (strain ATCC BAA-621 / DSM 15236 / T118) (Rhodoferax ferrireducens).